The sequence spans 442 residues: Proline--tRNA ligase (442 aa).

The protein belongs to the class-II aminoacyl-tRNA synthetase family. ProS type 2 subfamily. Homodimer.

The protein localises to the cytoplasm. It carries out the reaction tRNA(Pro) + L-proline + ATP = L-prolyl-tRNA(Pro) + AMP + diphosphate. Catalyzes the attachment of proline to tRNA(Pro) in a two-step reaction: proline is first activated by ATP to form Pro-AMP and then transferred to the acceptor end of tRNA(Pro). This chain is Proline--tRNA ligase, found in Brucella melitensis biotype 2 (strain ATCC 23457).